We begin with the raw amino-acid sequence, 438 residues long: Minor myo-inositol transporter IolF (438 aa).

Transmembrane regions (helical) follow at residues 15-35, 49-69, 86-106, 108-128, 147-167, 171-191, 230-250, 268-288, 295-312, 317-334, 359-379, and 387-407; these read IAAA…SAGL, IGLL…ALLG, MLVY…PMLL, GYII…TIIA, WAAG…LGLL, IVFA…IRLP, ILFL…MGFF, LLQM…FMPF, TVFG…TLFL, GLPI…NNGA, LMFF…PMII, and MAAI…LFAP.

This sequence belongs to the major facilitator superfamily. Sugar transporter (TC 2.A.1.1) family.

The protein resides in the cell membrane. Its pathway is polyol metabolism; myo-inositol degradation into acetyl-CoA. Minor myo-inositol uptake transporter. The chain is Minor myo-inositol transporter IolF (iolF) from Bacillus subtilis (strain 168).